Reading from the N-terminus, the 132-residue chain is Small ribosomal subunit protein uS8c (132 aa).

The protein belongs to the universal ribosomal protein uS8 family. Part of the 30S ribosomal subunit.

It is found in the plastid. It localises to the chloroplast. Its function is as follows. One of the primary rRNA binding proteins, it binds directly to 16S rRNA central domain where it helps coordinate assembly of the platform of the 30S subunit. The polypeptide is Small ribosomal subunit protein uS8c (rps8) (Spirogyra maxima (Green alga)).